The chain runs to 982 residues: Polyribonucleotide nucleotidyltransferase 2, mitochondrial (982 aa).

Residues 1–39 constitute a mitochondrion transit peptide; that stretch reads MSMAVASLRLLARGGRRRARFPAPLSVPGGRAAFLSGAA. Positions 624 to 678 constitute a KH domain; it reads PRLATLSFSSDSLRKLLFHRKKIEQETGARVSVSDGTVTIVAKTQPIMDKAIEKV. Residues 689–757 form the S1 motif 1 domain; it reads GRTYKGVVSS…LRGNIKLSLK (69 aa). Disordered regions lie at residues 792-814 and 832-892; these read PSKD…EETP and QDVT…NDVL. Low complexity-rich tracts occupy residues 846–855 and 868–877; these read AKSSPKLSKP and KKTSGASTTA. In terms of domain architecture, S1 motif 2 spans 920 to 982; sequence GDVVTAKVYQ…KGIPVFSLLD (63 aa).

The protein belongs to the polyribonucleotide nucleotidyltransferase family.

It localises to the mitochondrion. The catalysed reaction is RNA(n+1) + phosphate = RNA(n) + a ribonucleoside 5'-diphosphate. Functionally, involved in the 3'-end maturation of mitochondrial mRNAs, rRNAs and tRNAs. Functions as a poly(A) mRNA 3'-5' degrading phosphorylase. The protein is Polyribonucleotide nucleotidyltransferase 2, mitochondrial (PNP2) of Oryza sativa subsp. japonica (Rice).